A 466-amino-acid chain; its full sequence is Asparagine--tRNA ligase (466 aa).

The protein belongs to the class-II aminoacyl-tRNA synthetase family. As to quaternary structure, homodimer.

The protein resides in the cytoplasm. It carries out the reaction tRNA(Asn) + L-asparagine + ATP = L-asparaginyl-tRNA(Asn) + AMP + diphosphate + H(+). The chain is Asparagine--tRNA ligase from Vibrio cholerae serotype O1 (strain ATCC 39315 / El Tor Inaba N16961).